Consider the following 403-residue polypeptide: cAMP-dependent protein kinase regulatory subunit (403 aa).

The interval 1 to 155 (MADYTIPSEL…RIQASIGNNF (155 aa)) is dimerization and phosphorylation. The disordered stretch occupies residues 79–125 (YAYSTDDGFGTEDDDDDDDDEDDEAAIPPPVVNRGRRTSVSAESMAP). Acidic residues predominate over residues 87 to 103 (FGTEDDDDDDDDEDDEA). Position 117 is a phosphoserine (Ser-117). 3',5'-cyclic AMP contacts are provided by residues 156–278 (LFRN…EEVP), Glu-226, Arg-235, 279–403 (LLSS…PGEH), Glu-349, and Arg-358.

Belongs to the cAMP-dependent kinase regulatory chain family. As to quaternary structure, tetramer, composed of 2 regulatory (R) and 2 catalytic (C) subunits. In the presence of cAMP it dissociates into 2 active monomeric C subunits and an R dimer that binds four cAMP molecules.

The sequence is that of cAMP-dependent protein kinase regulatory subunit (PKAR) from Blastocladiella emersonii (Aquatic fungus).